The chain runs to 180 residues: Adenine phosphoribosyltransferase (180 aa).

The residue at position 2 (S2) is an N-acetylserine. Phosphoserine is present on residues S15 and S30. Y60 carries the phosphotyrosine modification. Residue S66 is modified to Phosphoserine. K114 bears the N6-acetyllysine mark. T135 is modified (phosphothreonine).

Belongs to the purine/pyrimidine phosphoribosyltransferase family. Homodimer.

It localises to the cytoplasm. The catalysed reaction is AMP + diphosphate = 5-phospho-alpha-D-ribose 1-diphosphate + adenine. Its pathway is purine metabolism; AMP biosynthesis via salvage pathway; AMP from adenine: step 1/1. Its function is as follows. Catalyzes a salvage reaction resulting in the formation of AMP, that is energically less costly than de novo synthesis. The chain is Adenine phosphoribosyltransferase from Stochomys longicaudatus (Target rat).